Reading from the N-terminus, the 473-residue chain is Photosystem II CP43 reaction center protein (473 aa).

Positions 1–14 (MKTLYSLRRFYHVE) are excised as a propeptide. An N-acetylthreonine modification is found at Thr-15. Thr-15 bears the Phosphothreonine mark. 5 helical membrane-spanning segments follow: residues 69-93 (LFEV…PHLA), 134-155 (LLGP…KDRN), 178-200 (KALY…RKIA), 255-275 (KPFA…LSYS), and 291-312 (WFNN…ASQA). A [CaMn4O5] cluster-binding site is contributed by Glu-367. A helical membrane pass occupies residues 447-471 (RARAAAAGFEKGIDRDFEPVLSMTP).

It belongs to the PsbB/PsbC family. PsbC subfamily. PSII is composed of 1 copy each of membrane proteins PsbA, PsbB, PsbC, PsbD, PsbE, PsbF, PsbH, PsbI, PsbJ, PsbK, PsbL, PsbM, PsbT, PsbX, PsbY, PsbZ, Psb30/Ycf12, at least 3 peripheral proteins of the oxygen-evolving complex and a large number of cofactors. It forms dimeric complexes. The cofactor is Binds multiple chlorophylls and provides some of the ligands for the Ca-4Mn-5O cluster of the oxygen-evolving complex. It may also provide a ligand for a Cl- that is required for oxygen evolution. PSII binds additional chlorophylls, carotenoids and specific lipids..

It is found in the plastid membrane. One of the components of the core complex of photosystem II (PSII). It binds chlorophyll and helps catalyze the primary light-induced photochemical processes of PSII. PSII is a light-driven water:plastoquinone oxidoreductase, using light energy to abstract electrons from H(2)O, generating O(2) and a proton gradient subsequently used for ATP formation. This is Photosystem II CP43 reaction center protein from Cuscuta exaltata (Tall dodder).